The primary structure comprises 50 residues: MARYRCCRSRSRSRCYRRRRRCRTRRRRCCRRRRARRCCRRRYKLRCRRY.

Belongs to the protamine P1 family. Cross-linked by interchain disulfide bonds around the DNA-helix. As to expression, testis.

Its subcellular location is the nucleus. The protein localises to the chromosome. Functionally, protamines substitute for histones in the chromatin of sperm during the haploid phase of spermatogenesis. They compact sperm DNA into a highly condensed, stable and inactive complex. The chain is Sperm protamine P1 (PRM1) from Saimiri sciureus (Common squirrel monkey).